A 456-amino-acid chain; its full sequence is Cysteine--tRNA ligase (456 aa).

Cys28 serves as a coordination point for Zn(2+). Residues 30 to 40 (MTVYDYCHLGH) carry the 'HIGH' region motif. The Zn(2+) site is built by Cys209, His234, and Glu238. Residues 266-270 (KMSKS) carry the 'KMSKS' region motif. Residue Lys269 coordinates ATP.

This sequence belongs to the class-I aminoacyl-tRNA synthetase family. As to quaternary structure, monomer. It depends on Zn(2+) as a cofactor.

The protein resides in the cytoplasm. The catalysed reaction is tRNA(Cys) + L-cysteine + ATP = L-cysteinyl-tRNA(Cys) + AMP + diphosphate. The sequence is that of Cysteine--tRNA ligase from Dechloromonas aromatica (strain RCB).